Here is a 248-residue protein sequence, read N- to C-terminus: Mannose-binding protein C (248 aa).

Residues 1–20 form the signal peptide; the sequence is MSLIPSLSLLLMSMVAASYS. The Collagen-like domain maps to 42–99; that stretch reads GINGFPGKDGRDGTKGEKGEPGQGLRGLQGPPGKLGPPGNPGPSGSPGPKGQKGDPGN. Residues 43 to 110 form a disordered region; the sequence is INGFPGKDGR…PDCDSSLAVS (68 aa). Pro-47 carries the 4-hydroxyproline modification. The segment covering 49-61 has biased composition (basic and acidic residues); it reads KDGRDGTKGEKGE. A 4-hydroxyproline mark is found at Pro-73, Pro-79, Pro-82, and Pro-88. Positions 75–87 are enriched in pro residues; the sequence is KLGPPGNPGPSGS. Positions 112 to 130 form a coiled coil; it reads RKALQTEMARIKKWLTFSL. A C-type lectin domain is found at 134 to 245; the sequence is VGNKFFLTNG…CSSSHLAVCE (112 aa). 2 disulfides stabilise this stretch: Cys-155/Cys-244 and Cys-222/Cys-236.

As to quaternary structure, oligomeric complex of 3 or more homotrimers. Interacts with MASP1 and MASP2. Interacts with MEP1A and MEP1B and may inhibit their catalytic activity. Hydroxylation on proline residues within the sequence motif, GXPG, is most likely to be 4-hydroxy as this fits the requirement for 4-hydroxylation in vertebrates.

The protein resides in the secreted. Calcium-dependent lectin involved in innate immune defense. Binds mannose, fucose and N-acetylglucosamine on different microorganisms and activates the lectin complement pathway. Binds to late apoptotic cells, as well as to apoptotic blebs and to necrotic cells, but not to early apoptotic cells, facilitating their uptake by macrophages. This is Mannose-binding protein C (MBL2) from Nomascus concolor (Black crested gibbon).